A 473-amino-acid chain; its full sequence is H(+)/Cl(-) exchange transporter ClcA (473 aa).

The Cytoplasmic segment spans residues methionine 1–proline 32. Residues leucine 33–valine 69 form a helical membrane-spanning segment. Over histidine 70–proline 76 the chain is Periplasmic. A helical transmembrane segment spans residues leucine 77–tyrosine 100. A Selectivity filter part_1 motif is present at residues glycine 106–proline 110. Serine 107 contributes to the chloride binding site. An intramembrane region (helical) is located at residues isoleucine 109 to leucine 116. The Cytoplasmic segment spans residues glutamate 117–arginine 123. Helical transmembrane passes span tryptophan 124–glycine 141 and glutamate 148–phenylalanine 166. Residues glycine 146–proline 150 carry the Selectivity filter part_2 motif. At arginine 167 to threonine 176 the chain is on the cytoplasmic side. 2 consecutive intramembrane regions (helical) follow at residues leucine 177–alanine 189 and proline 193–isoleucine 201. At glutamate 202 to serine 214 the chain is on the cytoplasmic side. The chain crosses the membrane as a helical span at residues isoleucine 215–phenylalanine 232. Residues asparagine 233–leucine 252 lie on the Periplasmic side of the membrane. A helical transmembrane segment spans residues tryptophan 253–histidine 281. At arginine 282 to asparagine 287 the chain is on the cytoplasmic side. The helical transmembrane segment at isoleucine 288–alanine 309 threads the bilayer. The Periplasmic portion of the chain corresponds to proline 310–serine 329. Helical transmembrane passes span methionine 330 to serine 349 and glycine 355 to valine 376. Positions glycine 355–proline 359 match the Selectivity filter part_3 motif. 2 residues coordinate chloride: isoleucine 356 and phenylalanine 357. Over glutamate 377–alanine 386 the chain is Periplasmic. An intramembrane region (helical) is located at residues glycine 387–serine 401. Residues isoleucine 402–alanine 404 constitute an intramembrane region (note=Loop between two helices). An intramembrane region (helical) is located at residues proline 405–threonine 416. Positions aspartate 417 to leucine 421 form an intramembrane region, note=Loop between two helices. A helical membrane pass occupies residues isoleucine 422–phenylalanine 438. Over threonine 439 to threonine 473 the chain is Cytoplasmic. Tyrosine 445 contacts chloride.

This sequence belongs to the chloride channel (TC 2.A.49) family. ClcA subfamily. Homodimer.

The protein resides in the cell inner membrane. It catalyses the reaction 2 chloride(in) + H(+)(out) = 2 chloride(out) + H(+)(in). In terms of biological role, proton-coupled chloride transporter. Functions as antiport system and exchanges two chloride ions for 1 proton. Probably acts as an electrical shunt for an outwardly-directed proton pump that is linked to amino acid decarboxylation, as part of the extreme acid resistance (XAR) response. This is H(+)/Cl(-) exchange transporter ClcA from Shigella flexneri serotype 5b (strain 8401).